The following is a 325-amino-acid chain: Centromere protein O (325 aa).

Positions 1–35 (MEEERNSDEKENALCGRSLTAASRDGGGRMPAAPL) are disordered. Positions 55 to 112 (LEMLEAQAHELGLKQEEKEQQEKKLDRLKARVQELRARRDELRAKVELQEKRLLDKEG) form a coiled coil.

Belongs to the CENP-O/MCM21 family. In terms of assembly, component of the CENPA-HI complex, at least composed of CENPH, CENPI, CENPK, CENPL, CENPM, CENPO and CENPP. Component of a discrete complex composed of at least CENPO, CENPP, CENPQ, CENPR and CENPU.

The protein resides in the nucleus. Its subcellular location is the chromosome. It is found in the centromere. Component of the CENPA-HI complex, a centromeric complex involved in assembly of kinetochore proteins, mitotic progression and chromosome segregation. Involved in kinetochore assembly and required for recovery from spindle damage. The protein is Centromere protein O (CENPO) of Gallus gallus (Chicken).